The following is a 277-amino-acid chain: Phosphoenolpyruvate synthase regulatory protein (277 aa).

157–164 (GVSRCGKT) lines the ADP pocket.

Belongs to the pyruvate, phosphate/water dikinase regulatory protein family. PSRP subfamily.

It carries out the reaction [pyruvate, water dikinase] + ADP = [pyruvate, water dikinase]-phosphate + AMP + H(+). The catalysed reaction is [pyruvate, water dikinase]-phosphate + phosphate + H(+) = [pyruvate, water dikinase] + diphosphate. In terms of biological role, bifunctional serine/threonine kinase and phosphorylase involved in the regulation of the phosphoenolpyruvate synthase (PEPS) by catalyzing its phosphorylation/dephosphorylation. The chain is Phosphoenolpyruvate synthase regulatory protein from Escherichia coli O7:K1 (strain IAI39 / ExPEC).